The following is a 482-amino-acid chain: Serine carboxypeptidase-like 36 (482 aa).

Residues 1-25 (MGKRQDWSVTACIFLFLSLASQIHC) form the signal peptide. Cystine bridges form between Cys-119-Cys-363, Cys-275-Cys-286, and Cys-310-Cys-331. Ser-210 is an active-site residue. Residue Asn-228 is glycosylated (N-linked (GlcNAc...) asparagine). Residues Asn-312 and Asn-352 are each glycosylated (N-linked (GlcNAc...) asparagine). The active site involves Asp-402. Residues Asn-418 and Asn-444 are each glycosylated (N-linked (GlcNAc...) asparagine). Residue His-455 is part of the active site.

It belongs to the peptidase S10 family. In terms of tissue distribution, expressed in seedlings, flowers and siliques.

It is found in the secreted. Functionally, probable carboxypeptidase. The polypeptide is Serine carboxypeptidase-like 36 (SCPL36) (Arabidopsis thaliana (Mouse-ear cress)).